The following is a 172-amino-acid chain: Adenine phosphoribosyltransferase (172 aa).

The protein belongs to the purine/pyrimidine phosphoribosyltransferase family. As to quaternary structure, homodimer.

The protein localises to the cytoplasm. The catalysed reaction is AMP + diphosphate = 5-phospho-alpha-D-ribose 1-diphosphate + adenine. It participates in purine metabolism; AMP biosynthesis via salvage pathway; AMP from adenine: step 1/1. Its function is as follows. Catalyzes a salvage reaction resulting in the formation of AMP, that is energically less costly than de novo synthesis. The polypeptide is Adenine phosphoribosyltransferase (Clostridium beijerinckii (strain ATCC 51743 / NCIMB 8052) (Clostridium acetobutylicum)).